We begin with the raw amino-acid sequence, 256 residues long: Small ribosomal subunit protein uS2 (256 aa).

This sequence belongs to the universal ribosomal protein uS2 family.

This is Small ribosomal subunit protein uS2 from Ruegeria sp. (strain TM1040) (Silicibacter sp.).